The sequence spans 371 residues: MAATCEISNIFSNYFSAMYSSEDSTLASVPPAATFGADDLVLTLSNPQMSLEGTEKASWLGEQPQFWSKTQVLDWISYQVEKNKYDASAIDFSRCDMDGATLCNCALEELRLVFGPLGDQLHAQLRDLTSSSSDELSWIIELLEKDGMAFQEALDPGPFDQGSPFAQELLDDGQQASPYHPGSCGAGAPSPGSSDVSTAGTGASRSSHSSDSGGSDVDLDPTDGKLFPSDGFRDCKKGDPKHGKRKRGRPRKLSKEYWDCLEGKKSKHAPRGTHLWEFIRDILIHPELNEGLMKWENRHEGVFKFLRSEAVAQLWGQKKKNSNMTYEKLSRAMRYYYKREILERVDGRRLVYKFGKNSSGWKEEEVLQSRN.

The PNT domain occupies 46–132; sequence NPQMSLEGTE…AQLRDLTSSS (87 aa). The short motif at 137-145 is the 9aaTAD element; sequence SWIIELLEK. Positions 173-251 are disordered; the sequence is GQQASPYHPG…HGKRKRGRPR (79 aa). The span at 181 to 216 shows a compositional bias: low complexity; the sequence is PGSCGAGAPSPGSSDVSTAGTGASRSSHSSDSGGSD. Basic and acidic residues predominate over residues 231–241; the sequence is GFRDCKKGDPK. A compositionally biased stretch (basic residues) spans 242–251; that stretch reads HGKRKRGRPR. The ETS DNA-binding region spans 273–355; that stretch reads THLWEFIRDI…DGRRLVYKFG (83 aa).

Belongs to the ETS family. As to quaternary structure, interacts with TBP. Interacts with CREBBP and EP300; these act as transcriptional coactivators of ELF3 and positively modulate its function. Interacts with XRCC5/KU86 and XRCC6/KU70; these inhibit the ability of ELF3 to bind DNA and negatively modulate its transcriptional activity. Associated with CLND7 and POU2F3. Interacts with ZNF768. In terms of tissue distribution, expressed exclusively in tissues containing a high content of terminally differentiated epithelial cells including mammary gland, colon, trachea, kidney, prostate, uterus, stomach and skin.

The protein resides in the cytoplasm. It is found in the nucleus. In terms of biological role, transcriptional activator that binds and transactivates ETS sequences containing the consensus nucleotide core sequence GGA[AT]. Acts synergistically with POU2F3 to transactivate the SPRR2A promoter and with RUNX1 to transactivate the ANGPT1 promoter. Also transactivates collagenase, CCL20, CLND7, FLG, KRT8, NOS2, PTGS2, SPRR2B, TGFBR2 and TGM3 promoters. Represses KRT4 promoter activity. Involved in mediating vascular inflammation. May play an important role in epithelial cell differentiation and tumorigenesis. May be a critical downstream effector of the ERBB2 signaling pathway. May be associated with mammary gland development and involution. Plays an important role in the regulation of transcription with TATA-less promoters in preimplantation embryos, which is essential in preimplantation development. This chain is ETS-related transcription factor Elf-3, found in Homo sapiens (Human).